A 292-amino-acid chain; its full sequence is Phosphatidylglycerol--prolipoprotein diacylglyceryl transferase (292 aa).

3 helical membrane passes run 18-38 (LFGV…GLLI), 67-87 (LLTW…VLFY), and 105-125 (GGMS…AFCL). Arg-150 is an a 1,2-diacyl-sn-glycero-3-phospho-(1'-sn-glycerol) binding site. A run of 3 helical transmembrane segments spans residues 193–213 (QIYE…LLVW), 222–242 (GSVS…VEFV), and 266–286 (GLTM…YLIL).

It belongs to the Lgt family.

It is found in the cell inner membrane. It catalyses the reaction L-cysteinyl-[prolipoprotein] + a 1,2-diacyl-sn-glycero-3-phospho-(1'-sn-glycerol) = an S-1,2-diacyl-sn-glyceryl-L-cysteinyl-[prolipoprotein] + sn-glycerol 1-phosphate + H(+). The protein operates within protein modification; lipoprotein biosynthesis (diacylglyceryl transfer). Catalyzes the transfer of the diacylglyceryl group from phosphatidylglycerol to the sulfhydryl group of the N-terminal cysteine of a prolipoprotein, the first step in the formation of mature lipoproteins. In Cereibacter sphaeroides (strain ATCC 17023 / DSM 158 / JCM 6121 / CCUG 31486 / LMG 2827 / NBRC 12203 / NCIMB 8253 / ATH 2.4.1.) (Rhodobacter sphaeroides), this protein is Phosphatidylglycerol--prolipoprotein diacylglyceryl transferase.